Here is a 550-residue protein sequence, read N- to C-terminus: Carboxypeptidase Y homolog A (550 aa).

A signal peptide spans 1 to 18; the sequence is MKSLVLGLLVGSAIASGP. A propeptide spanning residues 19–131 is cleaved from the precursor; sequence LQHVLHAPPE…KLAQYDLRIR (113 aa). 5 cysteine pairs are disulfide-bonded: C185–C424, C319–C333, C343–C366, C350–C359, and C388–C394. N216 carries N-linked (GlcNAc...) asparagine glycosylation. The active site involves S272. D463 is a catalytic residue. N-linked (GlcNAc...) asparagine glycosylation is found at N493 and N514. The active site involves H525.

The protein belongs to the peptidase S10 family.

It is found in the vacuole. The catalysed reaction is Release of a C-terminal amino acid with broad specificity.. Its function is as follows. Vacuolar carboxypeptidase involved in degradation of small peptides. Digests preferentially peptides containing an aliphatic or hydrophobic residue in P1' position, as well as methionine, leucine or phenylalanine in P1 position of ester substrate. This chain is Carboxypeptidase Y homolog A (CPYA), found in Paracoccidioides lutzii (strain ATCC MYA-826 / Pb01) (Paracoccidioides brasiliensis).